The following is a 137-amino-acid chain: Small ribosomal subunit protein uS12 (137 aa).

Disordered regions lie at residues 1–21 and 34–57; these read MPTI…KSDS and VHTK…TPKK. Aspartate 102 carries the 3-methylthioaspartic acid modification.

It belongs to the universal ribosomal protein uS12 family. In terms of assembly, part of the 30S ribosomal subunit. Contacts proteins S8 and S17. May interact with IF1 in the 30S initiation complex.

With S4 and S5 plays an important role in translational accuracy. Functionally, interacts with and stabilizes bases of the 16S rRNA that are involved in tRNA selection in the A site and with the mRNA backbone. Located at the interface of the 30S and 50S subunits, it traverses the body of the 30S subunit contacting proteins on the other side and probably holding the rRNA structure together. The combined cluster of proteins S8, S12 and S17 appears to hold together the shoulder and platform of the 30S subunit. In Streptococcus uberis (strain ATCC BAA-854 / 0140J), this protein is Small ribosomal subunit protein uS12.